A 57-amino-acid chain; its full sequence is Protein 19.3 (57 aa).

The chain is Protein 19.3 from Escherichia coli (Bacteriophage T7).